The primary structure comprises 354 residues: 5,10-methenyltetrahydromethanopterin hydrogenase (354 aa).

This sequence belongs to the HMD family.

It catalyses the reaction 5,10-methenyl-5,6,7,8-tetrahydromethanopterin + H2 = 5,10-methylenetetrahydromethanopterin + H(+). The protein operates within one-carbon metabolism; methanogenesis from CO(2); 5,10-methylene-5,6,7,8-tetrahydromethanopterin from 5,10-methenyl-5,6,7,8-tetrahydromethanopterin (hydrogen route): step 1/1. Functionally, catalyzes the reversible reduction of methenyl-H(4)MPT(+) to methylene-H(4)MPT. The polypeptide is 5,10-methenyltetrahydromethanopterin hydrogenase (Methanococcus maripaludis (strain C7 / ATCC BAA-1331)).